A 371-amino-acid polypeptide reads, in one-letter code: MYDFAIIGSGVAGATLAKELRYRYKVAVIEKGKKPSYASEGKNVEINYVYGLGGSGVYSLGNAIKTEIKGYKIDKDIYKEIWEELKIKAPKDDFLNDIDKAFIELGFEKMEKFIDFDRCNKCGECARKICKAKWTPLNYLKESNANIITEFNIKAINYSNYYEILDDKGRKIKAKNLIISAGGINSPRILKKMIDDENIGKNLFIDTFVTVGGILEDSYLNKDISMLVYKKYKNFMLATHYSKLLINEIKKDYKDVKEKDIVGIMIKIKDENNGVVLDNDVKKEITKEDFKTLARGICKATKYLYKLGVDDIYTTIPRGSHPGGSLSLVVDEFEVREGLYVCDASLFKEALGVPPIVSIIALSKKFVREIL.

The 31-residue stretch at 110 to 140 (MEKFIDFDRCNKCGECARKICKAKWTPLNYL) folds into the 4Fe-4S ferredoxin-type domain.

This is an uncharacterized protein from Methanocaldococcus jannaschii (strain ATCC 43067 / DSM 2661 / JAL-1 / JCM 10045 / NBRC 100440) (Methanococcus jannaschii).